A 437-amino-acid chain; its full sequence is Trypacidin cluster transcriptional coactivator tpcD (437 aa).

Positions Leu-75–Pro-144 constitute an HTH iclR-type domain. A DNA-binding region (H-T-H motif) is located at residues Ile-105–Arg-124.

Specifically expressed in conidia.

The protein localises to the nucleus. In terms of biological role, transcriptional coactivator; part of the gene cluster that mediates the biosynthesis of trypacidin, a mycotoxin with antiprotozoal activity and that plays a role in the infection process. With tpcE, coregulates the production of trypacidin. The polypeptide is Trypacidin cluster transcriptional coactivator tpcD (Aspergillus fumigatus (strain ATCC MYA-4609 / CBS 101355 / FGSC A1100 / Af293) (Neosartorya fumigata)).